We begin with the raw amino-acid sequence, 2025 residues long: MSNRPNNNPGGSLRRSQRNTAGAQPQDDSIGGRSCSSSSAVIVPQPEDPDRANTSERQKTGQVPKKDNSRGVKRSASPDYNRTNSPSSAKKPRAFQHIESLSETNKPPSKSKKRHLDQEQQLKSAQLPSTSKAHTRKSVAAGSSRSQKRKRTESSCVKSGSGSESTGAEERSAKPTKLASKSATSAKAGCSTITDSSSAASTSSSSSAVASASSTVPAGARVKQGKDQNKARRSRSASSPSPRRSSREKEQSKTGGSSKFDWAARFSPKVSLPKTKLSLPGSSKSETSKPGPSGLQAKLASLRKSTKKRSESPPAELPSLRRSTRQKTTGSCASTSRRGSGLGKRGAAEARRQEKMADPEGNQETVNSSAARTDEAPQGAAASSSVAGAVGMTTSGESESDDSEMGRLQALLEARGLPPHLFGPLGPRMSQLFHRTIGSGASSKAQQLLQGLQASDESQQLQAVIEMCQLLVMGNEETLGGFPVKSVVPALITLLQMEHNFDIMNHACRALTYMMEALPRSSAVVVDAIPVFLEKLQVIQCIDVAEQALTALEMLSRRHSKAILQAGGLADCLLYLEFFSINAQRNALAIAANCCQSITPDEFHFVADSLPLLTQRLTHQDKKSVESTCLCFARLVDNFQHEENLLQQVASKDLLTNVQQLLVVTPPILSSGMFIMVVRMFSLMCSNCPTLAVQLMKQNIAETLHFLLCGASNGSCQEQIDLVPRSPQELYELTSLICELMPCLPKEGIFAVDTMLKKGNAQNTDGAIWQWRDDRGLWHPYNRIDSRIIEAAHQVGEDEISLSTLGRVYTIDFNSMQQINEDTGTARAIQRKPNPLANTNTSGYSDLKKDDARAQLMKEDPELAKSFIKTLFGVLYEVYSSSAGPAVRHKCLRAILRIIYFADAELLKDVLKNHAVSSHIASMLSSQDLKIVVGALQMAEILMQKLPDIFSVYFRREGVMHQVKHLAESESLLTSPPKACTNGSGSLGSTTPASSGTATAATNASADLGSPSLQHSRDDSLDLSPQGRLSDVLKRKRLPKRGPRRPKYSPPRDDDKVDNQAKSPTTTQSPKSSFLASLNPKTWGRLSAQSNSNNIEPARTAGVSGLARAASKDTISNNREKIKGWIKEQAHKFVERYFSSENMDGSNPALNVLQRLCAATEQLNLQVDGGAECLVEIRSIVSESDVSSFEIQHSGFVKQLLLYLTSKSEKDAVSREIRLKRFLHVFFSSPLPGEEPVGRVEPVGHAPLLALVHKMNNCLSQMEQFPVKVHDFPSGNGSGGSFSLNRGSQALKFFNTHQLKCQLQRHPDCANVKQWKGGPVKIDPLALVQAIERYLVVRGYGRVREDDEDSDDDGSDEEIDESLAAQFLNSGNVRHRLQFYIGEHLLPYNMTVYQAVRQFSVQAEDERESTDDESNPLGRAGIWTKTHTIWYKPVREDEESSKDCVGGKRGRAQTAPTKTSPRNAKKHDELWHDGVCPSVANPLEVYLIPTPPENITFEDPSLDVILLLRVLHAISRYWYYLYDNAMCKEIIPTSEFINSKLTAKANRQLQDPLVIMTGNIPTWLTELGKTCPFFFPFDTRQMLFYVTAFDRDRAMQRLLDTNPEINQSDSQDSRVAPRLDRKKRTVNREELLKQAESVMQDLGSSRAMLEIQYENEVGTGLGPTLEFYALVSQELQRADLGLWRGEEVTLSNPKGSQEGTKYIQNLQGLFALPFGRTAKPAHIAKVKMKFRFLGKLMAKAIMDFRLVDLPLGLPFYKWMLRQETSLTSHDLFDIDPVVARSVYHLEDIVRQKKRLEQDKSQTKESLQYALETLTMNGCSVEDLGLDFTLPGFPNIELKKGGKDIPVTIHNLEEYLRLVIFWALNEGVCRQFDSFRDGFESVFPLSHLQYFYPEELDQLLCGSKADTWDAKTLMECCRPDHGYTHDSRAVKFLFEILSSFDNEQQRLFLQFVTGSPRLPVGGFRSLNPPLTIVRKTFESTENPDDFLPSVMTCVNYLKLPDYSSIEIMRDKLLIAAREGQQSFHLS.

Positions 1–10 (MSNRPNNNPG) are enriched in polar residues. Positions 1–404 (MSNRPNNNPG…SGESESDDSE (404 aa)) are disordered. Residue serine 2 is modified to N-acetylserine. Position 12 is a phosphoserine (serine 12). The segment covering 18 to 27 (RNTAGAQPQD) has biased composition (polar residues). Residues 48-70 (DPDRANTSERQKTGQVPKKDNSR) are compositionally biased toward basic and acidic residues. Phosphoserine is present on residues serine 77, serine 85, and serine 100. 3 stretches are compositionally biased toward polar residues: residues 78–88 (PDYNRTNSPSS), 99–108 (ESLSETNKPP), and 119–132 (EQQL…STSK). 2 stretches are compositionally biased toward low complexity: residues 154–166 (SSCV…SEST) and 175–216 (PTKL…SSTV). N6-acetyllysine is present on lysine 181. Residues 280–290 (PGSSKSETSKP) show a composition bias toward polar residues. Phosphoserine is present on residues serine 310 and serine 312. A compositionally biased stretch (polar residues) spans 326–338 (QKTTGSCASTSRR). Positions 346-358 (GAAEARRQEKMAD) are enriched in basic and acidic residues. Residues 362-371 (NQETVNSSAA) show a composition bias toward polar residues. Low complexity predominate over residues 379 to 397 (GAAASSSVAGAVGMTTSGE). The region spanning 755-869 (MLKKGNAQNT…DPELAKSFIK (115 aa)) is the WWE domain. The disordered stretch occupies residues 970-1077 (ESLLTSPPKA…QSPKSSFLAS (108 aa)). Serine 975 carries the post-translational modification Phosphoserine. The segment covering 983–1006 (GSGSLGSTTPASSGTATAATNASA) has biased composition (low complexity). A phosphoserine mark is found at serine 1024 and serine 1030. Basic residues predominate over residues 1034-1047 (KRKRLPKRGPRRPK). Serine 1049 is subject to Phosphoserine. Residues 1050–1059 (PPRDDDKVDN) are compositionally biased toward basic and acidic residues. The span at 1062-1073 (KSPTTTQSPKSS) shows a compositional bias: low complexity. Phosphoserine is present on residues serine 1063, serine 1350, serine 1355, serine 1362, and serine 1409. Threonine 1410 carries the phosphothreonine modification. Disordered stretches follow at residues 1440–1466 (SSKD…NAKK) and 1601–1620 (TNPE…PRLD). N6-acetyllysine is present on lysine 1458. Serine 1460 carries the post-translational modification Phosphoserine. The K-box stretch occupies residues 1529–1603 (EIIPTSEFIN…AMQRLLDTNP (75 aa)). The 108-residue stretch at 1918–2025 (PDHGYTHDSR…REGQQSFHLS (108 aa)) folds into the HECT domain. Residue cysteine 1992 is the Glycyl thioester intermediate of the active site.

Belongs to the UPL family. K-HECT subfamily. Interacts with MYC; leading to disrupt interaction with isoform p19ARF/ARF of CDKN2A. Interacts with TRADD; leading to disrupt interaction with isoform p19ARF/ARF of CDKN2A. Interacts with SMARCC1; leading to disrupt interaction with SMARCE1.

It localises to the nucleus. Its subcellular location is the nucleoplasm. The catalysed reaction is S-ubiquitinyl-[E2 ubiquitin-conjugating enzyme]-L-cysteine + [acceptor protein]-L-lysine = [E2 ubiquitin-conjugating enzyme]-L-cysteine + N(6)-ubiquitinyl-[acceptor protein]-L-lysine.. It participates in protein modification; protein ubiquitination. In terms of biological role, E3 ubiquitin-protein ligase involved in ubiquitin fusion degradation (UFD) pathway and regulation of DNA repair. Part of the ubiquitin fusion degradation (UFD) pathway, a process that mediates ubiquitination of protein at their N-terminus, regardless of the presence of lysine residues in target proteins. Acts as a key regulator of DNA damage response by acting as a suppressor of RNF168, an E3 ubiquitin-protein ligase that promotes accumulation of 'Lys-63'-linked histone H2A and H2AX at DNA damage sites, thereby acting as a guard against excessive spreading of ubiquitinated chromatin at damaged chromosomes. In normal cells, mediates ubiquitination and degradation of isoform p19ARF/ARF of CDKN2A, a lysine-less tumor suppressor required for p53/TP53 activation under oncogenic stress. In cancer cells, however, isoform p19ARF/ARF and TRIP12 are located in different cell compartments, preventing isoform p19ARF/ARF ubiquitination and degradation. Does not mediate ubiquitination of isoform p16-INK4a of CDKN2A. Also catalyzes ubiquitination of NAE1 and SMARCE1, leading to their degradation. Ubiquitination and degradation of target proteins is regulated by interaction with proteins such as MYC, TRADD or SMARCC1, which disrupt the interaction between TRIP12 and target proteins. Mediates ubiquitination of ASXL1: following binding to N(6)-methyladenosine methylated DNA, ASXL1 is ubiquitinated by TRIP12, leading to its degradation and subsequent inactivation of the PR-DUB complex. This chain is E3 ubiquitin-protein ligase TRIP12 (Trip12), found in Rattus norvegicus (Rat).